We begin with the raw amino-acid sequence, 335 residues long: Corrinoid adenosyltransferase PduO (335 aa).

Position 206 (His206) interacts with heme.

Belongs to the Cob(I)alamin adenosyltransferase family. PduO subfamily. In terms of assembly, forms a complex with PduS. Heme b is required as a cofactor. The cofactor is Mg(2+).

The protein localises to the bacterial microcompartment. The catalysed reaction is cob(I)alamin-[corrinoid adenosyltransferase] + ATP = apo-[corrinoid adenosyltransferase] + adenosylcob(III)alamin + triphosphate. It participates in polyol metabolism; 1,2-propanediol degradation. Its pathway is cofactor biosynthesis; adenosylcobalamin biosynthesis. In terms of biological role, converts cob(I)alamin to adenosylcobalamin (adenosylcob(III)alamin), the cofactor for propanediol dehydratase. Found in the bacterial microcompartment (BMC) dedicated to 1,2-propanediol (1,2-PD) degradation. PduS and PduO allow regeneration of the adenosylcobalamin cofactor within the BMC. Its function is as follows. Expression of a cosmid containing the full 21-gene pdu operon in E.coli allows E.coli to grow on 1,2-propanediol (1,2-PD) with the appearance of bacterial microcompartments (BMC) in its cytoplasm. The 1,2-PD-specific bacterial microcompartment (BMC) concentrates low levels of 1,2-PD catabolic enzymes, concentrates volatile reaction intermediates thus enhancing pathway flux and keeps the level of toxic, mutagenic propionaldehyde low. In Citrobacter freundii, this protein is Corrinoid adenosyltransferase PduO.